Here is a 582-residue protein sequence, read N- to C-terminus: Phosphoribosylaminoimidazole carboxylase (582 aa).

An ATP-grasp domain is found at 114-305 (KKYLAERGVA…QFENHLRAIL (192 aa)). ATP is bound at residue 143 to 200 (AGRLGLPLMLKAKTLAYDGRGNSPLKSASSGDIQASLKFLGDRPLYAEGWAPFVKEVA).

In the C-terminal section; belongs to the AIR carboxylase family. Class I subfamily.

The catalysed reaction is 5-amino-1-(5-phospho-D-ribosyl)imidazole-4-carboxylate + H(+) = 5-amino-1-(5-phospho-beta-D-ribosyl)imidazole + CO2. It functions in the pathway purine metabolism; IMP biosynthesis via de novo pathway; 5-amino-1-(5-phospho-D-ribosyl)imidazole-4-carboxylate from 5-amino-1-(5-phospho-D-ribosyl)imidazole (carboxylase route): step 1/1. This Cryptococcus neoformans var. neoformans serotype D (strain JEC21 / ATCC MYA-565) (Filobasidiella neoformans) protein is Phosphoribosylaminoimidazole carboxylase (ADE2).